The sequence spans 139 residues: Histone H2A (139 aa).

The disordered stretch occupies residues 1 to 27; it reads MSGKGKAGKSGGKAGSETKSMSRSSKA. N-acetylserine is present on S2. N6-acetyllysine occurs at positions 9 and 13. The span at 17–27 shows a compositional bias: polar residues; the sequence is ETKSMSRSSKA. N5-methylglutamine is present on Q110. Residues 119-139 are disordered; it reads PELLPSKSSKGKKDEGVSQEL. A compositionally biased stretch (basic and acidic residues) spans 129–139; the sequence is GKKDEGVSQEL. Position 136 is a phosphoserine (S136). Positions 136 to 137 match the [ST]-Q motif motif; sequence SQ.

Belongs to the histone H2A family. In terms of assembly, the nucleosome is a histone octamer containing two molecules each of H2A, H2B, H3 and H4 assembled in one H3-H4 heterotetramer and two H2A-H2B heterodimers. The octamer wraps approximately 147 bp of DNA. In terms of processing, phosphorylated to form H2AS128ph (gamma-H2A) in response to DNA double-strand breaks (DSBs) generated by exogenous genotoxic agents and by stalled replication forks. Phosphorylation is dependent on the DNA damage checkpoint kinases MEC1/ATR and TEL1/ATM, spreads on either side of a detected DSB site and may mark the surrounding chromatin for recruitment of proteins required for DNA damage signaling and repair. Gamma-H2A is removed from the DNA prior to the strand invasion-primer extension step of the repair process and subsequently dephosphorylated. Dephosphorylation is necessary for efficient recovery from the DNA damage checkpoint. Post-translationally, acetylated by ESA1 to form H2AK4ac and H2AK7ac.

The protein localises to the nucleus. Its subcellular location is the chromosome. Functionally, core component of nucleosome which plays a central role in DNA double strand break (DSB) repair. Nucleosomes wrap and compact DNA into chromatin, limiting DNA accessibility to the cellular machineries which require DNA as a template. Histones thereby play a central role in transcription regulation, DNA repair, DNA replication and chromosomal stability. DNA accessibility is regulated via a complex set of post-translational modifications of histones, also called histone code, and nucleosome remodeling. The chain is Histone H2A from Agaricus bisporus (White button mushroom).